Consider the following 126-residue polypeptide: Aspartate 1-decarboxylase (126 aa).

The Schiff-base intermediate with substrate; via pyruvic acid role is filled by serine 25. Serine 25 bears the Pyruvic acid (Ser) mark. Threonine 57 contributes to the substrate binding site. Tyrosine 58 (proton donor) is an active-site residue. Substrate is bound at residue 73–75 (GAA).

Belongs to the PanD family. As to quaternary structure, heterooctamer of four alpha and four beta subunits. It depends on pyruvate as a cofactor. Post-translationally, is synthesized initially as an inactive proenzyme, which is activated by self-cleavage at a specific serine bond to produce a beta-subunit with a hydroxyl group at its C-terminus and an alpha-subunit with a pyruvoyl group at its N-terminus.

The protein resides in the cytoplasm. The catalysed reaction is L-aspartate + H(+) = beta-alanine + CO2. The protein operates within cofactor biosynthesis; (R)-pantothenate biosynthesis; beta-alanine from L-aspartate: step 1/1. In terms of biological role, catalyzes the pyruvoyl-dependent decarboxylation of aspartate to produce beta-alanine. The sequence is that of Aspartate 1-decarboxylase from Yersinia pestis bv. Antiqua (strain Antiqua).